We begin with the raw amino-acid sequence, 566 residues long: MNFTHIIAEKINQTLENTFDLDKLEKLVEKPKDLNRGDYAFPTFSLSAKFHEAPQKIALKIADEIDRTNFANVKAVGPYVNFFIQRVEFTNQLLKEILLNDDFGRNNQGAGKKIVIDMSSPNIAKPMSMGHLRSTVIGEAISKIAKANGYQTIKINFLGDWGTQFGLMIAAYKLWGDDKLINKNPVDELVKLYVKINKESETDKSLKDSGRAWFKKLEDGDPEAVKLWNWFKSVSLKEFQEVYDRLGVSFDSMNGEAFYNDKMEPVVKMLASKGLLTESQGAEIVDLPNLLPKDNYPIAMIKRSDGATQYITRDLASAIYRHDAYDFAKSLYVVGAEQKDHFDQMKAILKLAGDDWADDIEHIGFGMITMNGKKMSTRKGNIVPLVDVLDTARQLAAEQISEKNPGLENADHVAEEVGAGAVVFNDLQKDRNLSIDFNLEKIVQFEGDTGPYVQYTHARAMSILRKSGQQAILNTGVTFVDEEAWPIVSRLSAYPEMIKRAWQLREPSIVAKYLLSLARDFNSYYAHTKILVNNEKMQSRLSLVQGVCSVLKSGLNLLGVSAPNQM.

Positions 121–131 (PNIAKPMSMGH) match the 'HIGH' region motif.

It belongs to the class-I aminoacyl-tRNA synthetase family. As to quaternary structure, monomer.

The protein resides in the cytoplasm. The enzyme catalyses tRNA(Arg) + L-arginine + ATP = L-arginyl-tRNA(Arg) + AMP + diphosphate. This chain is Arginine--tRNA ligase, found in Oenococcus oeni (strain ATCC BAA-331 / PSU-1).